The primary structure comprises 545 residues: Glucose-6-phosphate isomerase (545 aa).

E351 serves as the catalytic Proton donor. Active-site residues include H382 and K510.

The protein belongs to the GPI family.

The protein localises to the cytoplasm. It carries out the reaction alpha-D-glucose 6-phosphate = beta-D-fructose 6-phosphate. Its pathway is carbohydrate biosynthesis; gluconeogenesis. The protein operates within carbohydrate degradation; glycolysis; D-glyceraldehyde 3-phosphate and glycerone phosphate from D-glucose: step 2/4. Functionally, catalyzes the reversible isomerization of glucose-6-phosphate to fructose-6-phosphate. This is Glucose-6-phosphate isomerase from Helicobacter pylori (strain G27).